The sequence spans 150 residues: MPGDQVILLSLMALGVVARNALIVTAAGVVLILRVLALERFFPLLERRGLEAGLIFLLIAVLVPFATGEVGWAEIRQSFTSWTGLAAILGGIIAAVLSGYGVTLLQVKPEVIVGMVVGTILGVVLFKGIPVGPLAAAGFTAILLALVRGH.

The next 4 helical transmembrane spans lie at Ala-13–Leu-33, Ala-52–Trp-72, Leu-85–Leu-105, and Val-111–Val-131.

This sequence belongs to the UPF0756 family.

Its subcellular location is the cell membrane. The polypeptide is UPF0756 membrane protein STH2648 (Symbiobacterium thermophilum (strain DSM 24528 / JCM 14929 / IAM 14863 / T)).